Reading from the N-terminus, the 256-residue chain is Imidazole glycerol phosphate synthase subunit HisF (256 aa).

Active-site residues include Asp-12 and Asp-131.

The protein belongs to the HisA/HisF family. As to quaternary structure, heterodimer of HisH and HisF.

It localises to the cytoplasm. It catalyses the reaction 5-[(5-phospho-1-deoxy-D-ribulos-1-ylimino)methylamino]-1-(5-phospho-beta-D-ribosyl)imidazole-4-carboxamide + L-glutamine = D-erythro-1-(imidazol-4-yl)glycerol 3-phosphate + 5-amino-1-(5-phospho-beta-D-ribosyl)imidazole-4-carboxamide + L-glutamate + H(+). Its pathway is amino-acid biosynthesis; L-histidine biosynthesis; L-histidine from 5-phospho-alpha-D-ribose 1-diphosphate: step 5/9. Functionally, IGPS catalyzes the conversion of PRFAR and glutamine to IGP, AICAR and glutamate. The HisF subunit catalyzes the cyclization activity that produces IGP and AICAR from PRFAR using the ammonia provided by the HisH subunit. This is Imidazole glycerol phosphate synthase subunit HisF from Pseudomonas entomophila (strain L48).